The following is a 440-amino-acid chain: UDP-N-acetylmuramoylalanine--D-glutamate ligase (440 aa).

115–121 (GSNGKST) is a binding site for ATP.

The protein belongs to the MurCDEF family.

It is found in the cytoplasm. The catalysed reaction is UDP-N-acetyl-alpha-D-muramoyl-L-alanine + D-glutamate + ATP = UDP-N-acetyl-alpha-D-muramoyl-L-alanyl-D-glutamate + ADP + phosphate + H(+). Its pathway is cell wall biogenesis; peptidoglycan biosynthesis. Its function is as follows. Cell wall formation. Catalyzes the addition of glutamate to the nucleotide precursor UDP-N-acetylmuramoyl-L-alanine (UMA). In Aliivibrio fischeri (strain ATCC 700601 / ES114) (Vibrio fischeri), this protein is UDP-N-acetylmuramoylalanine--D-glutamate ligase.